A 172-amino-acid chain; its full sequence is Translation initiation factor IF-3 (172 aa).

It belongs to the IF-3 family. Monomer.

The protein localises to the cytoplasm. Its function is as follows. IF-3 binds to the 30S ribosomal subunit and shifts the equilibrium between 70S ribosomes and their 50S and 30S subunits in favor of the free subunits, thus enhancing the availability of 30S subunits on which protein synthesis initiation begins. This is Translation initiation factor IF-3 from Lactobacillus johnsonii (strain CNCM I-12250 / La1 / NCC 533).